The primary structure comprises 185 residues: Translation initiation factor IF-3, chloroplastic (185 aa).

It belongs to the IF-3 family. As to quaternary structure, monomer.

Its subcellular location is the plastid. The protein resides in the chloroplast. Functionally, IF-3 binds to the 30S ribosomal subunit and shifts the equilibrium between 70S ribosomes and their 50S and 30S subunits in favor of the free subunits, thus enhancing the availability of 30S subunits on which protein synthesis initiation begins. The polypeptide is Translation initiation factor IF-3, chloroplastic (Cyanidium caldarium (Red alga)).